We begin with the raw amino-acid sequence, 451 residues long: Methionine aminopeptidase 2-2 (451 aa).

Positions 1–101 (MAAKVADDVA…IDEVFPNDSY (101 aa)) are disordered. Positions 37-51 (EHEDSDDDNEAEEGA) are enriched in acidic residues. Residues 60–73 (KKKKKRKPRKKKKA) are compositionally biased toward basic residues. Substrate is bound at residue His-204. Residues Asp-224, Asp-235, and His-304 each contribute to the a divalent metal cation site. His-312 is a binding site for substrate. A divalent metal cation is bound by residues Glu-337 and Glu-432.

This sequence belongs to the peptidase M24A family. Methionine aminopeptidase eukaryotic type 2 subfamily. Requires Co(2+) as cofactor. It depends on Zn(2+) as a cofactor. Mn(2+) serves as cofactor. Fe(2+) is required as a cofactor.

It is found in the cytoplasm. It carries out the reaction Release of N-terminal amino acids, preferentially methionine, from peptides and arylamides.. Its function is as follows. Cotranslationally removes the N-terminal methionine from nascent proteins. The N-terminal methionine is often cleaved when the second residue in the primary sequence is small and uncharged (Met-Ala-, Cys, Gly, Pro, Ser, Thr, or Val). The polypeptide is Methionine aminopeptidase 2-2 (Pyrenophora tritici-repentis (strain Pt-1C-BFP) (Wheat tan spot fungus)).